Consider the following 644-residue polypeptide: Keratin, type II cytoskeletal 1 (644 aa).

Residues S2–R179 are head. Omega-N-methylarginine is present on R12. Phosphoserine is present on residues S18 and S21. Residues A22–R38 are compositionally biased toward low complexity. The tract at residues A22–S47 is disordered. An Omega-N-methylarginine modification is found at R45. S66 is modified (phosphoserine). R82 is modified (omega-N-methylarginine). Residues E180–L215 are coil 1A. The IF rod domain maps to E180–M493. Residues Q216–F234 are linker 1. A coil 1B region spans residues I235–M326. K276 is modified (N6,N6-dimethyllysine). A linker 12 region spans residues Q327 to I350. Residue S344 is modified to Phosphoserine. Positions I351 to E489 are coil 2. Disordered stretches follow at residues E489 to G523 and S568 to R644. A tail region spans residues E490–R644. Positions V501 to T511 are enriched in low complexity. 2 stretches are compositionally biased toward gly residues: residues S513–G523 and S568–S620. Omega-N-methylarginine is present on residues R518 and R588. The segment covering G621 to S631 has biased composition (low complexity). Over residues V632 to R644 the composition is skewed to polar residues.

It belongs to the intermediate filament family. As to quaternary structure, heterotetramer of two type I and two type II keratins. Heterodimer with KRT10. Two heterodimers of KRT1 and KRT10 form a heterotetramer. Forms a heterodimer with KRT14; the interaction is more abundant in the absence of KRT5. Interacts with PLEC isoform 1C, when in a heterodimer with KRT10. Interacts with ITGB1 in the presence of RACK1 and SRC, and with RACK1. Interacts with C1QBP; the association represents a cell surface kininogen receptor. Interacts with EPPK1; interaction is dependent of higher-order structure of intermediate filament. Undergoes deimination of some arginine residues (citrullination). The source of this protein is neonatal foreskin. The 67-kDa type II keratins are expressed in terminally differentiating epidermis.

The protein localises to the cell membrane. It localises to the cytoplasm. Functionally, may regulate the activity of kinases such as PKC and SRC via binding to integrin beta-1 (ITB1) and the receptor of activated protein C kinase 1 (RACK1). In complex with C1QBP is a high affinity receptor for kininogen-1/HMWK. This is Keratin, type II cytoskeletal 1 (KRT1) from Homo sapiens (Human).